Reading from the N-terminus, the 126-residue chain is Histone H2B (126 aa).

Over residues 1 to 12 (MPEPAKSAPAPK) the composition is skewed to low complexity. The segment at 1 to 36 (MPEPAKSAPAPKKGSKKAVTKTQKKGDKKRKKSRKE) is disordered. 2 positions are modified to N6-acetyllysine: Lys-6 and Lys-13. Basic residues predominate over residues 13-34 (KGSKKAVTKTQKKGDKKRKKSR). A Phosphoserine modification is found at Ser-15. 2 positions are modified to N6-acetyllysine: Lys-16 and Lys-21. Lys-121 is covalently cross-linked (Glycyl lysine isopeptide (Lys-Gly) (interchain with G-Cter in ubiquitin)).

Belongs to the histone H2B family. The nucleosome is a histone octamer containing two molecules each of H2A, H2B, H3 and H4 assembled in one H3-H4 heterotetramer and two H2A-H2B heterodimers. The octamer wraps approximately 147 bp of DNA. Post-translationally, monoubiquitination of Lys-121 by the RNF20/40 complex gives a specific tag for epigenetic transcriptional activation and is also prerequisite for histone H3 'Lys-4' and 'Lys-79' methylation. Phosphorylated on Ser-15 during apoptosis; which facilitates apoptotic chromatin condensation.

It localises to the nucleus. It is found in the chromosome. Its function is as follows. Core component of nucleosome. Nucleosomes wrap and compact DNA into chromatin, limiting DNA accessibility to the cellular machineries which require DNA as a template. Histones thereby play a central role in transcription regulation, DNA repair, DNA replication and chromosomal stability. DNA accessibility is regulated via a complex set of post-translational modifications of histones, also called histone code, and nucleosome remodeling. The polypeptide is Histone H2B (Cairina moschata (Muscovy duck)).